Reading from the N-terminus, the 429-residue chain is Chaperone SurA (429 aa).

The signal sequence occupies residues 1–18 (MFKRIALVCALFSGVCFA). PpiC domains lie at 170 to 271 (NLTY…KLVA) and 281 to 380 (ITQT…EVIA).

The protein resides in the periplasm. It catalyses the reaction [protein]-peptidylproline (omega=180) = [protein]-peptidylproline (omega=0). Chaperone involved in the correct folding and assembly of outer membrane proteins. Recognizes specific patterns of aromatic residues and the orientation of their side chains, which are found more frequently in integral outer membrane proteins. May act in both early periplasmic and late outer membrane-associated steps of protein maturation. This Legionella pneumophila (strain Lens) protein is Chaperone SurA.